The primary structure comprises 130 residues: Small ribosomal subunit protein uS9 (130 aa).

This sequence belongs to the universal ribosomal protein uS9 family.

The polypeptide is Small ribosomal subunit protein uS9 (Pseudomonas fluorescens (strain SBW25)).